A 330-amino-acid polypeptide reads, in one-letter code: MKKTVLSGVQATGSLHLGNYLGAIKNWVKMQEEYNCFFFLADLHAITVDIKPSELNNSIMEVLAVYLAAGLNPDKVTIFAQSMVKEHTELAWLLNCVTPLGWLKRMTQFKDKAGSDQEKACLGLFSYPVLMAADILIYKADIVPVGEDQKQHLELTRDIAGVINRKFNKEILKVPEVLISETGTRIMSLRDGLKKMSKSDISDFSRINLKDDNDLIHQKIKKAKTDHLSFVSYDQETRPEISNLLDIYSSLSEESLEQIIGNYQNQGFAKFKEDLAEIIITNLQPIRDKYLELMNDKEYLLKILHKGAEKARIRASETVNEVKEQFGFVI.

Residues 10 to 12 and 18 to 19 contribute to the ATP site; these read QAT and GN. The 'HIGH' region motif lies at 11–19; it reads ATGSLHLGN. Asp134 provides a ligand contact to L-tryptophan. ATP contacts are provided by residues 146–148, Ile186, and 195–199; these read GED and KMSKS. Positions 195–199 match the 'KMSKS' region motif; the sequence is KMSKS.

It belongs to the class-I aminoacyl-tRNA synthetase family. Homodimer.

It localises to the cytoplasm. The enzyme catalyses tRNA(Trp) + L-tryptophan + ATP = L-tryptophyl-tRNA(Trp) + AMP + diphosphate + H(+). Its function is as follows. Catalyzes the attachment of tryptophan to tRNA(Trp). In Rickettsia conorii (strain ATCC VR-613 / Malish 7), this protein is Tryptophan--tRNA ligase.